The chain runs to 254 residues: Ribosomal RNA small subunit methyltransferase J (254 aa).

Residues 107 to 108 (RD), 123 to 124 (ER), and Asp177 contribute to the S-adenosyl-L-methionine site.

It belongs to the methyltransferase superfamily. RsmJ family.

The protein resides in the cytoplasm. The enzyme catalyses guanosine(1516) in 16S rRNA + S-adenosyl-L-methionine = N(2)-methylguanosine(1516) in 16S rRNA + S-adenosyl-L-homocysteine + H(+). In terms of biological role, specifically methylates the guanosine in position 1516 of 16S rRNA. The sequence is that of Ribosomal RNA small subunit methyltransferase J from Histophilus somni (strain 2336) (Haemophilus somnus).